The chain runs to 255 residues: Type III pantothenate kinase (255 aa).

Residue 7-14 (DVGNTRLK) coordinates ATP. Residues Tyr96 and 103–106 (GADR) contribute to the substrate site. Asp105 acts as the Proton acceptor in catalysis. Thr133 is a binding site for ATP. Residue Thr183 participates in substrate binding.

This sequence belongs to the type III pantothenate kinase family. As to quaternary structure, homodimer. It depends on NH4(+) as a cofactor. K(+) is required as a cofactor.

It is found in the cytoplasm. It carries out the reaction (R)-pantothenate + ATP = (R)-4'-phosphopantothenate + ADP + H(+). It functions in the pathway cofactor biosynthesis; coenzyme A biosynthesis; CoA from (R)-pantothenate: step 1/5. Its function is as follows. Catalyzes the phosphorylation of pantothenate (Pan), the first step in CoA biosynthesis. In Polaromonas sp. (strain JS666 / ATCC BAA-500), this protein is Type III pantothenate kinase.